Consider the following 838-residue polypeptide: pre-rRNA 2'-O-ribose RNA methyltransferase FTSJ3 (838 aa).

The S-adenosyl-L-methionine site is built by Gly-56, Trp-58, Asp-76, Asp-92, and Asp-117. The active-site Proton acceptor is Lys-157. The segment at 332–367 (ISLSSEEEEEGDEEEAVAETKQAPEEEEEREEEQLN) is disordered. Ser-333, Ser-335, and Ser-336 each carry phosphoserine. Residues 336 to 348 (SEEEEEGDEEEAV) show a composition bias toward acidic residues. A Citrulline modification is found at Arg-390. Residues 453–482 (IYVSDAEDDDDTSLESDLDPEELAGVRTHS) are disordered. Over residues 457–474 (DAEDDDDTSLESDLDPEE) the composition is skewed to acidic residues. Ser-532 and Ser-545 each carry phosphoserine. The tract at residues 537-639 (DADEALEISQ…GRGSKADEDG (103 aa)) is disordered. Residue Lys-571 forms a Glycyl lysine isopeptide (Lys-Gly) (interchain with G-Cter in SUMO2) linkage. Ser-576 carries the post-translational modification Phosphoserine. Glycyl lysine isopeptide (Lys-Gly) (interchain with G-Cter in SUMO2) cross-links involve residues Lys-634 and Lys-650. Residue Ser-667 is modified to Phosphoserine. Residue Lys-669 forms a Glycyl lysine isopeptide (Lys-Gly) (interchain with G-Cter in SUMO2) linkage. The residue at position 679 (Ser-679) is a Phosphoserine. Lys-701 is covalently cross-linked (Glycyl lysine isopeptide (Lys-Gly) (interchain with G-Cter in SUMO2)). Residues 730–768 (IKKVAEAKARKKRRVLKKLEQTKKKAEAVVNTVDISERE) adopt a coiled-coil conformation. At Arg-774 the chain carries Citrulline. A compositionally biased stretch (basic residues) spans 802 to 812 (VRRPAGVKGHF). Residues 802–838 (VRRPAGVKGHFKVVDSRMKKDQRAQQRKEQKKKHKRK) form a disordered region. Basic and acidic residues predominate over residues 813–829 (KVVDSRMKKDQRAQQRK).

Belongs to the class I-like SAM-binding methyltransferase superfamily. RNA methyltransferase RlmE family. SPB1 subfamily. Interacts with NIP7. Post-translationally, citrullinated by PADI4.

The protein localises to the nucleus. It localises to the nucleolus. The catalysed reaction is a ribonucleotide in rRNA + S-adenosyl-L-methionine = a 2'-O-methylribonucleotide in rRNA + S-adenosyl-L-homocysteine + H(+). Functionally, RNA 2'-O-methyltransferase involved in the processing of the 34S pre-rRNA to 18S rRNA and in 40S ribosomal subunit formation. This is pre-rRNA 2'-O-ribose RNA methyltransferase FTSJ3 (Ftsj3) from Mus musculus (Mouse).